The chain runs to 177 residues: 2''-aminoglycoside nucleotidyltransferase (177 aa).

Residues 1-92 (MDTTQVTLIH…ELLDCEPAWW (92 aa)) form an N-terminal domain region. 3 residues coordinate Mg(2+): Asp-44, Asp-46, and Asp-86. Residue Asp-86 is the Proton acceptor of the active site. Residues 93–177 (ADEAYEIAEA…RAAFRSRYAA (85 aa)) are C-terminal domain. Ala-100 contributes to the kanamycin A binding site.

Monomer. The cofactor is Mg(2+).

It catalyses the reaction nucleoside triphosphate + gentamicin = diphosphate + 2''-nucleotidylgentamicin.. In terms of biological role, mediates bacterial resistance to kanamycin, gentamicin, dibekacin, sisomicin and tobramycin by adenylating the 2''-hydroxyl group of these antibiotics. This chain is 2''-aminoglycoside nucleotidyltransferase, found in Klebsiella pneumoniae.